Here is a 156-residue protein sequence, read N- to C-terminus: MSRRHAAEKREVLPDAKFGDKVLTKFMNNLMIDGKKSVAERIVYNAFDRVENKIKRAPVEVFHEALDNIKPSVEVRSRRVGGATYQVPVEVRPERREALAIRWLIAAARNRNENTMEERLAGELLDAVQSRGTAVKKREDTHKMAEANKAFSHYRW.

It belongs to the universal ribosomal protein uS7 family. As to quaternary structure, part of the 30S ribosomal subunit. Contacts proteins S9 and S11.

Functionally, one of the primary rRNA binding proteins, it binds directly to 16S rRNA where it nucleates assembly of the head domain of the 30S subunit. Is located at the subunit interface close to the decoding center, probably blocks exit of the E-site tRNA. This chain is Small ribosomal subunit protein uS7, found in Ruegeria pomeroyi (strain ATCC 700808 / DSM 15171 / DSS-3) (Silicibacter pomeroyi).